A 599-amino-acid chain; its full sequence is Cytadherence high molecular weight protein 3 (599 aa).

Over residues 220-236 (VQVDSGSQNHSFNNSPS) the composition is skewed to polar residues. Residues 220-241 (VQVDSGSQNHSFNNSPSLKPPL) form a disordered region.

The protein resides in the cell projection. The protein localises to the attachment organelle membrane. In terms of biological role, component of the cytoskeleton-like structure which stabilizes the shape of the wall-less mycoplasma. This cytoskeleton-like network of accessory proteins containing HMW proteins 1 to 5 allows the proper anchoring of cytadhesin proteins in the mycoplasmal membrane at the attachment organelle. Essential for successful surface parasitism. The chain is Cytadherence high molecular weight protein 3 (hmw3) from Mycoplasma genitalium (strain ATCC 33530 / DSM 19775 / NCTC 10195 / G37) (Mycoplasmoides genitalium).